Consider the following 202-residue polypeptide: Imidazoleglycerol-phosphate dehydratase (202 aa).

Belongs to the imidazoleglycerol-phosphate dehydratase family.

Its subcellular location is the cytoplasm. The enzyme catalyses D-erythro-1-(imidazol-4-yl)glycerol 3-phosphate = 3-(imidazol-4-yl)-2-oxopropyl phosphate + H2O. It functions in the pathway amino-acid biosynthesis; L-histidine biosynthesis; L-histidine from 5-phospho-alpha-D-ribose 1-diphosphate: step 6/9. The chain is Imidazoleglycerol-phosphate dehydratase from Rhizobium etli (strain ATCC 51251 / DSM 11541 / JCM 21823 / NBRC 15573 / CFN 42).